A 361-amino-acid chain; its full sequence is ATP phosphoribosyltransferase regulatory subunit (361 aa).

This sequence belongs to the class-II aminoacyl-tRNA synthetase family. HisZ subfamily. As to quaternary structure, heteromultimer composed of HisG and HisZ subunits.

The protein localises to the cytoplasm. Its pathway is amino-acid biosynthesis; L-histidine biosynthesis; L-histidine from 5-phospho-alpha-D-ribose 1-diphosphate: step 1/9. Its function is as follows. Required for the first step of histidine biosynthesis. May allow the feedback regulation of ATP phosphoribosyltransferase activity by histidine. In Thermus thermophilus (strain ATCC 27634 / DSM 579 / HB8), this protein is ATP phosphoribosyltransferase regulatory subunit.